Reading from the N-terminus, the 573-residue chain is MLKRFFLLLSSLLLVCNVQAGLFNNKPQYLTAAEAFIFSSSQQDGQLQLHWQIADGYYLYQKEIQLSAQNATLGDVTFPTAEKYQDEFFGEVAIFRDQLKLPVKLTDLKENPSLKIRYQGCTKGFCYPPETVVIPLNPSLQGNNSANSAALPSTIATPNAPQTELAENLSNNYLSIFGFLLLGIGLAFTPCVLPMLPLLSAIVIGHKNRPNTSRALLLSFTYVQGMALTYTLLGLTVAAIGLPFQVALQSPAVLISLAVLFTLLAASMFGLFEIRLPNTWQQKLNALSQQQQGGAVGNVFIMGIIAGLVASPCTSAPLSGALLYVAQSGNLLIGGLALYLLALGMGLPLILITVFGNQILPKSGEWLFKVKTAFGFVMLALPIFLISRILPSHYEPFLWSTLALAFLGWLISSLNYSTMLKQAVRILLFIAFGLTAYPWANLVWQTTSNTAQPTTPHLAMEKITSLTELEQKLTAYQGKKVMLDLYADWCVACKEFEKYTFTDPQVQQQLATMAVLQIDMTKNSAENTALMKHFNVLGLPTILFFDENGHEMTNVRITGFLTANQFLAWLNRL.

Positions 1–20 (MLKRFFLLLSSLLLVCNVQA) are cleaved as a signal peptide. At 21–175 (GLFNNKPQYL…AENLSNNYLS (155 aa)) the chain is on the periplasmic side. 2 disulfides stabilise this stretch: Cys121–Cys126 and Cys191–Cys313. A helical membrane pass occupies residues 176–196 (IFGFLLLGIGLAFTPCVLPML). At 197–227 (PLLSAIVIGHKNRPNTSRALLLSFTYVQGMA) the chain is on the cytoplasmic side. The helical transmembrane segment at 228 to 248 (LTYTLLGLTVAAIGLPFQVAL) threads the bilayer. Residues 249–251 (QSP) are Periplasmic-facing. A helical membrane pass occupies residues 252–272 (AVLISLAVLFTLLAASMFGLF). The Cytoplasmic portion of the chain corresponds to 273–292 (EIRLPNTWQQKLNALSQQQQ). A helical membrane pass occupies residues 293–313 (GGAVGNVFIMGIIAGLVASPC). Over 314 to 331 (TSAPLSGALLYVAQSGNL) the chain is Periplasmic. A helical transmembrane segment spans residues 332–352 (LIGGLALYLLALGMGLPLILI). The Cytoplasmic segment spans residues 353 to 365 (TVFGNQILPKSGE). The chain crosses the membrane as a helical span at residues 366-386 (WLFKVKTAFGFVMLALPIFLI). Residues 387–393 (SRILPSH) are Periplasmic-facing. A helical membrane pass occupies residues 394–414 (YEPFLWSTLALAFLGWLISSL). Topologically, residues 415-425 (NYSTMLKQAVR) are cytoplasmic. A helical membrane pass occupies residues 426-446 (ILLFIAFGLTAYPWANLVWQT). Residues 440-573 (ANLVWQTTSN…NQFLAWLNRL (134 aa)) enclose the Thioredoxin domain. Residues 447–573 (TSNTAQPTTP…NQFLAWLNRL (127 aa)) are Periplasmic-facing. An intrachain disulfide couples Cys490 to Cys493.

This sequence belongs to the thioredoxin family. DsbD subfamily.

The protein localises to the cell inner membrane. The catalysed reaction is [protein]-dithiol + NAD(+) = [protein]-disulfide + NADH + H(+). It carries out the reaction [protein]-dithiol + NADP(+) = [protein]-disulfide + NADPH + H(+). Required to facilitate the formation of correct disulfide bonds in some periplasmic proteins and for the assembly of the periplasmic c-type cytochromes. Acts by transferring electrons from cytoplasmic thioredoxin to the periplasm. This transfer involves a cascade of disulfide bond formation and reduction steps. The protein is Thiol:disulfide interchange protein DsbD of Haemophilus ducreyi (strain 35000HP / ATCC 700724).